A 122-amino-acid polypeptide reads, in one-letter code: Large ribosomal subunit protein uL14 (122 aa).

It belongs to the universal ribosomal protein uL14 family. As to quaternary structure, part of the 50S ribosomal subunit. Forms a cluster with proteins L3 and L19. In the 70S ribosome, L14 and L19 interact and together make contacts with the 16S rRNA in bridges B5 and B8.

In terms of biological role, binds to 23S rRNA. Forms part of two intersubunit bridges in the 70S ribosome. This chain is Large ribosomal subunit protein uL14, found in Rhodopirellula baltica (strain DSM 10527 / NCIMB 13988 / SH1).